The primary structure comprises 424 residues: UPF0761 membrane protein Smlt0865 (424 aa).

A run of 6 helical transmembrane segments spans residues 48–68 (VFAL…FPVF), 101–121 (SAGQ…LITL), 144–164 (FLVY…SLAV), 181–201 (WLAE…CITL), 216–236 (AVPG…GIGA), and 251–271 (VAFV…VLLG).

It belongs to the UPF0761 family.

It localises to the cell inner membrane. This is UPF0761 membrane protein Smlt0865 from Stenotrophomonas maltophilia (strain K279a).